A 47-amino-acid polypeptide reads, in one-letter code: MNNENSKFGFTAFAENWNGRLAMIGFSSALILELVSGQGVLHFFGIL.

At 1 to 14 the chain is on the cytoplasmic side; that stretch reads MNNENSKFGFTAFA. Positions 15–20 match the Chlorophyll-binding motif motif; the sequence is ENWNGR. At 15–36 the chain is embedded in the membrane; it reads ENWNGRLAMIGFSSALILELVS. Topologically, residues 37–47 are lumenal, thylakoid; that stretch reads GQGVLHFFGIL.

It belongs to the Hlip family. In terms of assembly, forms heterodimers with both HliA and HliB; these are associated with photosystem II (PSII) assembly intermediates containing CP47 (psbB). In the absence of CP47 (psbB) and HliD, forms a homooligomer in vivo that binds 2 chlorophyll a and 1 beta-carotenoid per monomer. Cofractionates in an approximately 50 kDa fraction the thylakoid membrane with HliD. Associated in vivo with monomeric PSII. Purified in several chlorophyll- and carotenoid-containing complexes, including photosystem II (PSII) assembly intermediate complex RCII* (iD1, D1, D2, PsbE, PsbF, PsbI, Ycf39, Ycf48, HliC and HliD) and the Ycf39-Hlip complex (Ycf39, HliC, HliD and pigments).

It localises to the cellular thylakoid membrane. In terms of biological role, forms a number of heteromers involved in photosystem II (PSII) assembly and/or repair under high light stress. Required for binding of chlorophyll and carotenoids by the Ycf39-Hlip complex. The Ycf39-Hlip complex binds D1 at an early stage of PSII assembly along with Ycf48, ribosomes and ChlG, the last enzyme in chlorophyll biosynthesis; it may be involved in chlorophyll reuse and delivery to D1 in the initial stages of PSII assembly. HliA-HliC and HliB-HliC heterodimers bind chlorophyll and carotenoids in a 1:0.6 ratio. Complexes bind mostly beta-carotenoid, but minor amounts of echinenone and beta-crytoxanthin are also detected. The complexes efficiently quench chlorophyll fluorescence, contributing to photoprotection. Deletion of 4 to 5 members of the Hlip family suggests the proteins are involved in regulation of chlorophyll biosynthesis, in stabilization of chlorophyll-binding proteins and/or in reuse of chlorophylls, and may regulate tetrapyrrole biosynthesis. Might bind chlorophyll and/or carotenoids in association with HliD (called the ScpBE pair). Functionally, the Hlips might regulate tetrapyrrole biosynthesis, maybe at the level of aminolevulinic acid synthesis and probably stabilize PSII assembly intermediates. This chain is High light-inducible protein HliC (hliC), found in Synechocystis sp. (strain ATCC 27184 / PCC 6803 / Kazusa).